Consider the following 523-residue polypeptide: MTGCCDDGPATGPRDLRERLRVVAVRGESLVVAADRASACAACAEAKGCGTRALMSMHRTDLMTIARPAGLIVAPGDEVEVAMSGNNLLAGAGLAYLLPALAFVVALALASGAGLSDGGAALVGGVVLMFSFLPLVLLEAARGCRGRCRCSTCIRGTADDGRRAAFRTGLALAAGLVLAGGVRVLTAPAPDVSETFYVFGTLLEVETHGVPEAQARDAMAVLGAHFRQMHRDWHAWAPGELESLNAAMAAGQSFEVDPGLAKLLQQGRDLACRSEGLFDPAVGGMVEAWGFHADTPPEAIRSDAVVAKLLAGAPKMTDLTITGTTVRSSNPAVQLDLGAYAKGAALDLAEADLTAAGIRDAVLNAGGGVQVLGDHGSRPWRVAIRDPFEWGVVGAVSLRPGEALHTSGNYERYFDRGGIRFSHIIDPRTARPMRGVVSVSVLSDNGALSDAAATALCVAGEEDWPRIAAQMGVRAVLRITDDGSIFATPEMRARLEAVEGGFPAPITVVDLPKDVAIPLCPEG.

3 consecutive transmembrane segments (helical) span residues 88-108 (LLAG…VALA), 118-138 (GGAA…LVLL), and 169-189 (GLAL…TAPA). FAD is bound by residues 277 to 279 (LFD) and D336. A339 contributes to the Mg(2+) binding site. FAD is bound by residues K342 and 423–425 (HII). D450 and T454 together coordinate Mg(2+).

In the N-terminal section; belongs to the RseC family. It in the C-terminal section; belongs to the ApbE family. Mg(2+) is required as a cofactor.

It localises to the cell membrane. It catalyses the reaction L-threonyl-[protein] + FAD = FMN-L-threonyl-[protein] + AMP + H(+). Flavin transferase that catalyzes the transfer of the FMN moiety of FAD and its covalent binding to the hydroxyl group of a threonine residue in a target flavoprotein. Is likely involved in the modification of RnfG and RnfD. Required for nitrogen fixation. This chain is FAD:protein FMN transferase, found in Rhodobacter capsulatus (Rhodopseudomonas capsulata).